The sequence spans 744 residues: Phosphoribosylformylglycinamidine synthase subunit PurL (744 aa).

His49 is an active-site residue. Residues Tyr52 and Lys91 each contribute to the ATP site. Residue Glu93 participates in Mg(2+) binding. Substrate contacts are provided by residues 94 to 97 (SHNH) and Arg116. His95 acts as the Proton acceptor in catalysis. Mg(2+) is bound at residue Asp117. Gln240 contacts substrate. Asp268 is a binding site for Mg(2+). 312–314 (ESQ) contacts substrate. Asp493 and Gly530 together coordinate ATP. Asn531 contacts Mg(2+). Ser533 lines the substrate pocket.

This sequence belongs to the FGAMS family. As to quaternary structure, monomer. Part of the FGAM synthase complex composed of 1 PurL, 1 PurQ and 2 PurS subunits.

The protein resides in the cytoplasm. The catalysed reaction is N(2)-formyl-N(1)-(5-phospho-beta-D-ribosyl)glycinamide + L-glutamine + ATP + H2O = 2-formamido-N(1)-(5-O-phospho-beta-D-ribosyl)acetamidine + L-glutamate + ADP + phosphate + H(+). The protein operates within purine metabolism; IMP biosynthesis via de novo pathway; 5-amino-1-(5-phospho-D-ribosyl)imidazole from N(2)-formyl-N(1)-(5-phospho-D-ribosyl)glycinamide: step 1/2. Part of the phosphoribosylformylglycinamidine synthase complex involved in the purines biosynthetic pathway. Catalyzes the ATP-dependent conversion of formylglycinamide ribonucleotide (FGAR) and glutamine to yield formylglycinamidine ribonucleotide (FGAM) and glutamate. The FGAM synthase complex is composed of three subunits. PurQ produces an ammonia molecule by converting glutamine to glutamate. PurL transfers the ammonia molecule to FGAR to form FGAM in an ATP-dependent manner. PurS interacts with PurQ and PurL and is thought to assist in the transfer of the ammonia molecule from PurQ to PurL. The protein is Phosphoribosylformylglycinamidine synthase subunit PurL of Nitrobacter hamburgensis (strain DSM 10229 / NCIMB 13809 / X14).